A 615-amino-acid polypeptide reads, in one-letter code: Chaperone protein HscA (615 aa).

This sequence belongs to the heat shock protein 70 family.

Its function is as follows. Chaperone involved in the maturation of iron-sulfur cluster-containing proteins. Has a low intrinsic ATPase activity which is markedly stimulated by HscB. Involved in the maturation of IscU. The chain is Chaperone protein HscA from Xenorhabdus nematophila (strain ATCC 19061 / DSM 3370 / CCUG 14189 / LMG 1036 / NCIMB 9965 / AN6).